We begin with the raw amino-acid sequence, 461 residues long: MDILFRIRGGFDLAFQLAPPKEMFIKNALRQVLSDLTTKLSSDALVLRVCNSSVYLWPNSDANTGELTDSSACKNVVRFIQFDQEEDTKRKFIKKKDKKLTDTQQIVNIDLMLEISTPLGAVTPILERENEEHHYINMSLPIDAVVSVAPEESWGKVRKLLVDAILRQLVDVEKCILRYMKGTSIVVPEPLHFQLPGKKNLVTVLYPSGIPDDQLQAYRKELHDLFNLPHDRPYFKRINAYHFPDELYKDGYIRNPHTYLSPPNIEGSMICVVQGTYAYHHYMQDRIDDNGWGCAYRSLQTICSWFRHQGYTERSIPTHREIQQALVDAGDKPATFVGSRQWIGSIEVQMVLNQLIGVTSKILFVNQGSEMASQGRELANHFQNVGTPVMVGGGVLAHTILGVAWNETTGQIKFLILDPHYTGAEDLQVMLEKGWCGWKSPDFWNKDAYYNLCLPQRPNAL.

Residues cysteine 294, aspartate 418, and histidine 420 contribute to the active site.

This sequence belongs to the peptidase C78 family. As to expression, expressed at high level in brain, kidney, stomach, skeletal muscle, liver, pancreas, spleen and testis.

It is found in the endoplasmic reticulum. It localises to the cytoplasm. Its subcellular location is the nucleus. Functionally, thiol-dependent isopeptidase that specifically cleaves UFM1, a ubiquitin-like modifier protein, from conjugated proteins, such as CD274/PD-L1, CYB5R3, DDRGK1, MRE11, RPL26/uL24, TRIP4 and RPL26/uL24. While it is also able to mediate the processing of UFM1 precursors, a prerequisite for conjugation reactions, UFSP2 mainly acts as a protein deUFMylase that mediates deconjugation of UFM1 from target proteins. Mediates deUFMylation of RPL26/uL24, a critical step to release the UFM1 ribosome E3 ligase (UREL) complex during the recycling of 60S ribosome subunits from the endoplasmic reticulum. Catalyzes deUFMylation of TRIP4, regulating intracellular nuclear receptors transactivation and thereby regulate cell proliferation and differentiation. This chain is Ufm1-specific protease 2, found in Mus musculus (Mouse).